We begin with the raw amino-acid sequence, 122 residues long: Large ribosomal subunit protein bL12 (122 aa).

It belongs to the bacterial ribosomal protein bL12 family. Homodimer. Part of the ribosomal stalk of the 50S ribosomal subunit. Forms a multimeric L10(L12)X complex, where L10 forms an elongated spine to which 2 to 4 L12 dimers bind in a sequential fashion. Binds GTP-bound translation factors.

Functionally, forms part of the ribosomal stalk which helps the ribosome interact with GTP-bound translation factors. Is thus essential for accurate translation. The polypeptide is Large ribosomal subunit protein bL12 (Staphylococcus epidermidis (strain ATCC 35984 / DSM 28319 / BCRC 17069 / CCUG 31568 / BM 3577 / RP62A)).